The following is a 297-amino-acid chain: Large ribosomal subunit protein uL18 (297 aa).

An N-acetylglycine modification is found at glycine 2. An N6-acetyllysine mark is found at lysine 5 and lysine 48. Serine 185 is subject to Phosphoserine. At lysine 220 the chain carries N6-acetyllysine; alternate. A Glycyl lysine isopeptide (Lys-Gly) (interchain with G-Cter in SUMO1); alternate cross-link involves residue lysine 220. Lysine 220 participates in a covalent cross-link: Glycyl lysine isopeptide (Lys-Gly) (interchain with G-Cter in SUMO2); alternate. Threonine 232 is subject to Phosphothreonine. Residues 253–297 (YEKKPKKEVKKKRWNRPKMSLAQKKDRVAQKKASFLRAQERAAES) form a disordered region. Positions 258–268 (KKEVKKKRWNR) are enriched in basic residues. Serine 272 bears the Phosphoserine mark.

This sequence belongs to the universal ribosomal protein uL18 family. In terms of assembly, component of the large ribosomal subunit (LSU). Part of the 5S RNP complex, which is a LSU subcomplex composed of the 5S RNA, RPL5 and RPL11. Component of a hexameric 5S RNP precursor complex, composed of 5S RNA, RRS1, RPF2/BXDC1, RPL5, RPL11 and HEATR3; this complex acts as a precursor for ribosome assembly. Interacts with NVL in an ATP-dependent manner. Interacts with RRP1B. Interacts with IPO5, IPO7 and KPNB1; these interactions may be involved in RPL5 nuclear import for the assembly of ribosomal subunits. Interacts with RRP1B.

The protein resides in the cytoplasm. Its subcellular location is the nucleus. The protein localises to the nucleolus. In terms of biological role, component of the ribosome, a large ribonucleoprotein complex responsible for the synthesis of proteins in the cell. The small ribosomal subunit (SSU) binds messenger RNAs (mRNAs) and translates the encoded message by selecting cognate aminoacyl-transfer RNA (tRNA) molecules. The large subunit (LSU) contains the ribosomal catalytic site termed the peptidyl transferase center (PTC), which catalyzes the formation of peptide bonds, thereby polymerizing the amino acids delivered by tRNAs into a polypeptide chain. The nascent polypeptides leave the ribosome through a tunnel in the LSU and interact with protein factors that function in enzymatic processing, targeting, and the membrane insertion of nascent chains at the exit of the ribosomal tunnel. As part of the 5S RNP/5S ribonucleoprotein particle it is an essential component of the LSU, required for its formation and the maturation of rRNAs. It also couples ribosome biogenesis to p53/TP53 activation. As part of the 5S RNP it accumulates in the nucleoplasm and inhibits MDM2, when ribosome biogenesis is perturbed, mediating the stabilization and the activation of TP53. The polypeptide is Large ribosomal subunit protein uL18 (RPL5) (Macaca fascicularis (Crab-eating macaque)).